Reading from the N-terminus, the 409-residue chain is N-carbamoyl-L-amino acid amidohydrolase (409 aa).

H79, D90, E125, and H189 together coordinate a divalent metal cation. An N-carbamoyl-L-alpha-amino acid-binding residues include Q192, H225, N273, R286, and A355. The segment at 208–325 is involved in dimerization; the sequence is GIAGLIWVKF…TTERLQEMAP (118 aa). H380 is an a divalent metal cation binding site.

Belongs to the peptidase M20 family. In terms of assembly, homodimer. Requires Mn(2+) as cofactor. It depends on Ni(2+) as a cofactor. Co(2+) serves as cofactor. The cofactor is Fe(2+).

It catalyses the reaction an N-carbamoyl-L-alpha-amino acid + H2O + 2 H(+) = an L-alpha-amino acid + NH4(+) + CO2. The catalysed reaction is N-carbamoyl-L-methionine + H2O + 2 H(+) = L-methionine + NH4(+) + CO2. It carries out the reaction N-acetyl-L-methionine + H2O = L-methionine + acetate. The enzyme catalyses N-carbamoyl-L-alanine + H2O + 2 H(+) = L-alanine + NH4(+) + CO2. It catalyses the reaction N-carbamoyl-L-glutamate + H2O + 2 H(+) = L-glutamate + NH4(+) + CO2. The catalysed reaction is N-carbamoylglycine + H2O + 2 H(+) = glycine + NH4(+) + CO2. It carries out the reaction N-carbamoyl-L-leucine + H2O + 2 H(+) = L-leucine + NH4(+) + CO2. Catalyzes the hydrolysis of aliphatic N-carbamoyl-L-alpha-amino acids to free L-alpha-amino acids. Is strictly L-specific since it is inactive toward N-carbamoyl-D-alpha-amino acids. Is not able to use aromatic N-carbamoyl-L-alpha-amino acids like N-carbamoyl-L-tryptophan and N-carbamoyl-L-phenylalanine as substrates, but is also able to hydrolyze N-acetyl-L-methionine. This Geobacillus stearothermophilus (Bacillus stearothermophilus) protein is N-carbamoyl-L-amino acid amidohydrolase.